Here is a 466-residue protein sequence, read N- to C-terminus: MEKSFDYDVIIIGTGPGGEGAAMNLAKRQKKVAIIERYHQVGGGCTHWGTIPSKALRQSVSRLIEYNSNPLFNQNEQVKQLTFQDILSHASAVIQKQVSLRSGFYNRNRVEHIQGQASFIDAHTISISHPDGSVEKISAKQIMIATGSRPYRPDDIDFDHPRVYDSDSILSLKHAPQHVIIYGAGVIGSEYASIFRGLGVKVDLINTRERLLSFLDTEMSDSLSYHLWNSGVVIRHGEEIERVESSEDAVIVHLKSGKKMRADCLLFANGRTGNTADLNLAAAGLKADGRGQLKVNDCYQTEVDNIFAVGDVIGYPSLASAAFDQGRIAASAMVDSSSKAKLIVDIPTGIYTIPEISSVGKTEQELTEAKIPYEVGRAQFKHLARAQISNNLVGSLKILFHRETKEILGIHCFGENAAEIIHIGQAIMQQTNGGNTIEYFVETTFNYPTMAEAFRVAALNGLNRLF.

36–45 contributes to the FAD binding site; sequence ERYHQVGGGC.

Belongs to the class-I pyridine nucleotide-disulfide oxidoreductase family. FAD is required as a cofactor.

The protein resides in the cytoplasm. The catalysed reaction is NAD(+) + NADPH = NADH + NADP(+). Conversion of NADPH, generated by peripheral catabolic pathways, to NADH, which can enter the respiratory chain for energy generation. The protein is Soluble pyridine nucleotide transhydrogenase of Colwellia psychrerythraea (strain 34H / ATCC BAA-681) (Vibrio psychroerythus).